Reading from the N-terminus, the 438-residue chain is Glucosamine kinase (438 aa).

Residues Lys133, 186–188 (AYL), and Asp193 each bind ATP. Residue Asp300 coordinates D-glucosamine. Residues Gln305, Asp317, and Asp319 each contribute to the Mg(2+) site. Positions 405 to 420 (QEVREYLYAVRHLPHW) match the Substrate specificity determinant motif motif. Glu409 is a D-glucosamine binding site.

The protein belongs to the actinobacterial glucosamine kinase family. Monomer. The cofactor is Mg(2+).

It catalyses the reaction D-glucosamine + ATP = D-glucosamine 6-phosphate + ADP + H(+). Its function is as follows. Catalyzes the ATP-dependent phosphorylation of D-glucosamine (GlcN) to D-glucosamine 6-phosphate. May be involved in the phosphorylation of acquired extracellular GlcN derived from the hydrolysis of chitosan, i.e., in the incorporation of exogenous GlcN into the bacterial GlcNAc metabolism. To a lesser extent, is also active on glucose, but is unable to phosphorylate maltose, 18 other sugars and several aminoglycoside antibiotics. In Streptacidiphilus jiangxiensis, this protein is Glucosamine kinase.